Consider the following 403-residue polypeptide: NADH-quinone oxidoreductase subunit D (403 aa).

The protein belongs to the complex I 49 kDa subunit family. As to quaternary structure, NDH-1 is composed of 15 different subunits. Subunits NuoB, C, D, E, F, and G constitute the peripheral sector of the complex.

The protein localises to the cell membrane. It catalyses the reaction a quinone + NADH + 5 H(+)(in) = a quinol + NAD(+) + 4 H(+)(out). Its function is as follows. NDH-1 shuttles electrons from NADH, via FMN and iron-sulfur (Fe-S) centers, to quinones in the respiratory chain. The immediate electron acceptor for the enzyme in this species is believed to be a menaquinone. Couples the redox reaction to proton translocation (for every two electrons transferred, four hydrogen ions are translocated across the cytoplasmic membrane), and thus conserves the redox energy in a proton gradient. This Deinococcus geothermalis (strain DSM 11300 / CIP 105573 / AG-3a) protein is NADH-quinone oxidoreductase subunit D.